We begin with the raw amino-acid sequence, 805 residues long: Putative cation-transporting ATPase MJ1226 (805 aa).

The next 4 membrane-spanning stretches (helical) occupy residues serine 53–isoleucine 73, histidine 75–tryptophan 95, isoleucine 226–leucine 246, and phenylalanine 258–threonine 278. Aspartate 311 (4-aspartylphosphate intermediate) is an active-site residue. The next 6 helical transmembrane spans lie at tyrosine 615 to leucine 637, proline 641 to tyrosine 663, isoleucine 680 to tyrosine 700, glutamate 712 to isoleucine 734, leucine 747 to methionine 769, and glycine 773 to isoleucine 790.

Belongs to the cation transport ATPase (P-type) (TC 3.A.3) family. Type IIIA subfamily.

The protein resides in the cell membrane. It carries out the reaction ATP + H2O = ADP + phosphate + H(+). The protein is Putative cation-transporting ATPase MJ1226 of Methanocaldococcus jannaschii (strain ATCC 43067 / DSM 2661 / JAL-1 / JCM 10045 / NBRC 100440) (Methanococcus jannaschii).